The chain runs to 410 residues: MKQLIAKWNRVSLVKRIIIGIIIGITLAVTVPESTKWISIFGSLFVGALKAVAPVLVFFLVISAISRHQSGQKTNIQHILILYGFSTFLASLTAVVASFLFPVHLSLTESAKEVSPPSNITEVIQSLLFNIVDNPVHALLNANYIGILTWAVLLGIALRTAPETTKNVIAHFSDAISQIVTWVINFAPIGIMGLVFDAIVTNGLSALIDYGKLLAVLLGTMCFVAFVMNPLIVFLNIRQNPYPLVWRCIRESGVTAFFTRSSAANIPVNLRLSEMLGLNKNTYSISIPLGATINMAGAAVTISVLTLAAVHTLEIEVDLGTALILSVLSAIAAAGASGVAGGSLLLIPLACSLFGIPNDIAMQVVGVGFIIGVLQDSCETALNSSSDVLFTATAEYAKRRKEGKQVAIKA.

9 helical membrane passes run 11 to 31, 45 to 65, 79 to 99, 138 to 158, 179 to 199, 214 to 234, 285 to 305, 327 to 347, and 353 to 373; these read VSLVKRIIIGIIIGITLAVTV, FVGALKAVAPVLVFFLVISAI, ILILYGFSTFLASLTAVVASF, ALLNANYIGILTWAVLLGIAL, IVTWVINFAPIGIMGLVFDAI, LAVLLGTMCFVAFVMNPLIVF, ISIPLGATINMAGAAVTISVL, VLSAIAAAGASGVAGGSLLLI, and LFGIPNDIAMQVVGVGFIIGV.

Belongs to the dicarboxylate/amino acid:cation symporter (DAACS) (TC 2.A.23) family.

Its subcellular location is the cell membrane. The catalysed reaction is L-serine(in) + Na(+)(in) = L-serine(out) + Na(+)(out). The enzyme catalyses L-threonine(in) + Na(+)(in) = L-threonine(out) + Na(+)(out). In terms of biological role, involved in the import of serine and threonine into the cell, with the concomitant import of sodium (symport system). This chain is Serine/threonine transporter SstT, found in Geobacillus thermodenitrificans (strain NG80-2).